A 396-amino-acid polypeptide reads, in one-letter code: Tryptophan synthase beta chain (396 aa).

Lys96 is modified (N6-(pyridoxal phosphate)lysine).

Belongs to the TrpB family. Tetramer of two alpha and two beta chains. The cofactor is pyridoxal 5'-phosphate.

The enzyme catalyses (1S,2R)-1-C-(indol-3-yl)glycerol 3-phosphate + L-serine = D-glyceraldehyde 3-phosphate + L-tryptophan + H2O. It functions in the pathway amino-acid biosynthesis; L-tryptophan biosynthesis; L-tryptophan from chorismate: step 5/5. Functionally, the beta subunit is responsible for the synthesis of L-tryptophan from indole and L-serine. The chain is Tryptophan synthase beta chain from Azobacteroides pseudotrichonymphae genomovar. CFP2.